A 378-amino-acid polypeptide reads, in one-letter code: Ribosomal RNA large subunit methyltransferase G (378 aa).

The protein belongs to the methyltransferase superfamily. RlmG family.

The protein localises to the cytoplasm. It catalyses the reaction guanosine(1835) in 23S rRNA + S-adenosyl-L-methionine = N(2)-methylguanosine(1835) in 23S rRNA + S-adenosyl-L-homocysteine + H(+). In terms of biological role, specifically methylates the guanine in position 1835 (m2G1835) of 23S rRNA. This Salmonella gallinarum (strain 287/91 / NCTC 13346) protein is Ribosomal RNA large subunit methyltransferase G.